Reading from the N-terminus, the 402-residue chain is Phosphoglycerate kinase (402 aa).

Substrate is bound by residues 29-31, R45, 69-72, R125, and R158; these read DFN and HLGR. Residues K209, E331, and 357-360 contribute to the ATP site; that span reads GGDT.

This sequence belongs to the phosphoglycerate kinase family.

Its subcellular location is the cytoplasm. The enzyme catalyses (2R)-3-phosphoglycerate + ATP = (2R)-3-phospho-glyceroyl phosphate + ADP. Its pathway is carbohydrate degradation; glycolysis; pyruvate from D-glyceraldehyde 3-phosphate: step 2/5. The protein is Phosphoglycerate kinase (pgk) of Helicobacter pylori (strain ATCC 700392 / 26695) (Campylobacter pylori).